The following is a 241-amino-acid chain: Ribonuclease PH (241 aa).

Residues R87 and 125 to 127 contribute to the phosphate site; that span reads GTR.

This sequence belongs to the RNase PH family. Homohexameric ring arranged as a trimer of dimers.

It carries out the reaction tRNA(n+1) + phosphate = tRNA(n) + a ribonucleoside 5'-diphosphate. Functionally, phosphorolytic 3'-5' exoribonuclease that plays an important role in tRNA 3'-end maturation. Removes nucleotide residues following the 3'-CCA terminus of tRNAs; can also add nucleotides to the ends of RNA molecules by using nucleoside diphosphates as substrates, but this may not be physiologically important. Probably plays a role in initiation of 16S rRNA degradation (leading to ribosome degradation) during starvation. The polypeptide is Ribonuclease PH (Nitrosomonas europaea (strain ATCC 19718 / CIP 103999 / KCTC 2705 / NBRC 14298)).